The following is a 193-amino-acid chain: Orotate phosphoribosyltransferase (193 aa).

Glu-114–Ser-122 is a 5-phospho-alpha-D-ribose 1-diphosphate binding site. Thr-118 and Arg-146 together coordinate orotate.

It belongs to the purine/pyrimidine phosphoribosyltransferase family. PyrE subfamily. As to quaternary structure, homodimer. Mg(2+) is required as a cofactor.

It catalyses the reaction orotidine 5'-phosphate + diphosphate = orotate + 5-phospho-alpha-D-ribose 1-diphosphate. It participates in pyrimidine metabolism; UMP biosynthesis via de novo pathway; UMP from orotate: step 1/2. Catalyzes the transfer of a ribosyl phosphate group from 5-phosphoribose 1-diphosphate to orotate, leading to the formation of orotidine monophosphate (OMP). This chain is Orotate phosphoribosyltransferase, found in Chlorobium phaeobacteroides (strain BS1).